The primary structure comprises 70 residues: Probable U6 snRNA-associated Sm-like protein (70 aa).

One can recognise a Sm domain in the interval 3 to 70 (DPFCFLKMYL…ILFVGPRLLL (68 aa)).

This sequence belongs to the snRNP Sm proteins family.

Its subcellular location is the nucleus. Binds specifically to the 3'-terminal U-tract of U6 snRNA. This chain is Probable U6 snRNA-associated Sm-like protein, found in Encephalitozoon cuniculi (strain GB-M1) (Microsporidian parasite).